The sequence spans 37 residues: Large ribosomal subunit protein bL36 (37 aa).

This sequence belongs to the bacterial ribosomal protein bL36 family.

This chain is Large ribosomal subunit protein bL36, found in Clostridium perfringens (strain ATCC 13124 / DSM 756 / JCM 1290 / NCIMB 6125 / NCTC 8237 / Type A).